Consider the following 381-residue polypeptide: Cell division protein FtsZ (381 aa).

A disordered region spans residues 1 to 25; sequence MKFINDAIKESEKREKPSSSSMNSE. The span at 7 to 17 shows a compositional bias: basic and acidic residues; it reads AIKESEKREKP. GTP contacts are provided by residues 48 to 52, 135 to 137, Glu166, Arg170, and Asp213; these read GAGNN and GTG.

This sequence belongs to the FtsZ family. As to quaternary structure, homodimer. Polymerizes to form a dynamic ring structure in a strictly GTP-dependent manner. Interacts directly with several other division proteins.

The protein localises to the cytoplasm. In terms of biological role, essential cell division protein that forms a contractile ring structure (Z ring) at the future cell division site. The regulation of the ring assembly controls the timing and the location of cell division. One of the functions of the FtsZ ring is to recruit other cell division proteins to the septum to produce a new cell wall between the dividing cells. Binds GTP and shows GTPase activity. In Methanothermobacter thermautotrophicus (strain ATCC 29096 / DSM 1053 / JCM 10044 / NBRC 100330 / Delta H) (Methanobacterium thermoautotrophicum), this protein is Cell division protein FtsZ.